The chain runs to 343 residues: 4-hydroxy-2-oxovalerate aldolase 2 (343 aa).

One can recognise a Pyruvate carboxyltransferase domain in the interval 8–260; that stretch reads ITVHDMSLRD…ETGVDVFAIS (253 aa). Position 16-17 (16-17) interacts with substrate; that stretch reads RD. D17 is a binding site for Mn(2+). H20 acts as the Proton acceptor in catalysis. Substrate-binding residues include S170 and H199. The Mn(2+) site is built by H199 and H201. Y290 contributes to the substrate binding site.

It belongs to the 4-hydroxy-2-oxovalerate aldolase family.

The enzyme catalyses (S)-4-hydroxy-2-oxopentanoate = acetaldehyde + pyruvate. The protein is 4-hydroxy-2-oxovalerate aldolase 2 of Burkholderia lata (strain ATCC 17760 / DSM 23089 / LMG 22485 / NCIMB 9086 / R18194 / 383).